The chain runs to 55 residues: Protein CADMIUM TOLERANCE 2 (55 aa).

A helical membrane pass occupies residues 24–40 (GCLYACIFTALCCFCCY).

This sequence belongs to the CYSTM1 family. Expressed only in roots.

It localises to the cell membrane. It is found in the secreted. The protein localises to the cell wall. Its function is as follows. Confers resistance to heavy metal ions (e.g. cadmium (CdCl(2)) and copper (CuCl(2))) by chelating them at the plasma membrane of root cells, thus stopping their entry and reducing their accumulation. The polypeptide is Protein CADMIUM TOLERANCE 2 (Oryza sativa subsp. japonica (Rice)).